The chain runs to 201 residues: Glycerol-3-phosphate acyltransferase (201 aa).

5 consecutive transmembrane segments (helical) span residues 5-25 (LLGALLVAAGYLAGSIPFGVV), 55-75 (KMGVLVLVLDAAKAIVPILVA), 88-108 (WVTAVAVAAFVGHLFPVWLGF), 118-138 (LGIFAVLAPWAALAGLVGYAV), and 164-184 (TYGPRHPISWAGLAIALLIFL).

Belongs to the PlsY family. Probably interacts with PlsX.

It localises to the cell inner membrane. The enzyme catalyses an acyl phosphate + sn-glycerol 3-phosphate = a 1-acyl-sn-glycero-3-phosphate + phosphate. It participates in lipid metabolism; phospholipid metabolism. Functionally, catalyzes the transfer of an acyl group from acyl-phosphate (acyl-PO(4)) to glycerol-3-phosphate (G3P) to form lysophosphatidic acid (LPA). This enzyme utilizes acyl-phosphate as fatty acyl donor, but not acyl-CoA or acyl-ACP. This is Glycerol-3-phosphate acyltransferase from Anaeromyxobacter sp. (strain K).